The following is a 100-amino-acid chain: A-type ATP synthase subunit F (100 aa).

This sequence belongs to the V-ATPase F subunit family. In terms of assembly, has multiple subunits with at least A(3), B(3), C, D, E, F, H, I and proteolipid K(x).

It is found in the cell membrane. Component of the A-type ATP synthase that produces ATP from ADP in the presence of a proton gradient across the membrane. This Methanospirillum hungatei JF-1 (strain ATCC 27890 / DSM 864 / NBRC 100397 / JF-1) protein is A-type ATP synthase subunit F.